The following is a 522-amino-acid chain: Cell polarity protein mod5 (522 aa).

5 disordered regions span residues methionine 1–aspartate 83, lysine 119–asparagine 158, arginine 170–alanine 192, proline 251–proline 285, and tyrosine 300–lysine 516. Composition is skewed to polar residues over residues proline 27 to serine 46, leucine 66 to serine 76, and asparagine 131 to glutamate 146. Phosphoserine is present on serine 43. Over residues proline 258–proline 285 the composition is skewed to low complexity. Serine 303 bears the Phosphoserine mark. Residues lysine 308–lysine 318 show a composition bias toward basic and acidic residues. The span at glycine 335–aspartate 349 shows a compositional bias: polar residues. Phosphoserine is present on serine 350. Composition is skewed to polar residues over residues asparagine 363 to asparagine 396 and aspartate 404 to valine 431. Over residues serine 439–leucine 452 the composition is skewed to low complexity. 2 stretches are compositionally biased toward basic and acidic residues: residues histidine 472 to arginine 482 and proline 495 to lysine 516.

In terms of assembly, interacts with tea1 and tea3.

It localises to the cell membrane. In terms of biological role, with tea1, acts in a positive-feedback loop in the microtubule-mediated regulation of cell polarity. Involved in the anchoring of tea1 at the cortex as well as the correct localization of tea3. This is Cell polarity protein mod5 (mod5) from Schizosaccharomyces pombe (strain 972 / ATCC 24843) (Fission yeast).